The following is a 366-amino-acid chain: Putative [LysW]-aminoadipate semialdehyde/glutamate semialdehyde transaminase (366 aa).

Residues glycine 90–threonine 91 and phenylalanine 117 each bind pyridoxal 5'-phosphate. Residue arginine 120 participates in substrate binding. Residue aspartate 202 to glutamine 205 coordinates pyridoxal 5'-phosphate. Position 230 is an N6-(pyridoxal phosphate)lysine (lysine 230). Serine 254 contributes to the substrate binding site. Threonine 255 lines the pyridoxal 5'-phosphate pocket.

Belongs to the class-III pyridoxal-phosphate-dependent aminotransferase family. LysJ subfamily. In terms of assembly, homodimer. Pyridoxal 5'-phosphate serves as cofactor.

Its subcellular location is the cytoplasm. It carries out the reaction [amino-group carrier protein]-C-terminal-gamma-(L-lysyl)-L-glutamate + 2-oxoglutarate = [amino-group carrier protein]-C-terminal-N-(1-carboxy-5-oxopentan-1-yl)-L-glutamine + L-glutamate. It catalyses the reaction [amino-group carrier protein]-C-terminal-gamma-(L-ornithyl)-L-glutamate + 2-oxoglutarate = [amino-group carrier protein]-C-terminal-gamma-(L-glutamyl-5-semialdehyde)-L-glutamate + L-glutamate. It functions in the pathway amino-acid biosynthesis; L-lysine biosynthesis via AAA pathway; L-lysine from L-alpha-aminoadipate (Thermus route): step 4/5. It participates in amino-acid biosynthesis; L-arginine biosynthesis. Functionally, involved in both the arginine and lysine biosynthetic pathways. The polypeptide is Putative [LysW]-aminoadipate semialdehyde/glutamate semialdehyde transaminase (Pyrococcus furiosus (strain ATCC 43587 / DSM 3638 / JCM 8422 / Vc1)).